Reading from the N-terminus, the 150-residue chain is Ribosome maturation factor RimP (150 aa).

Belongs to the RimP family.

The protein resides in the cytoplasm. Functionally, required for maturation of 30S ribosomal subunits. The sequence is that of Ribosome maturation factor RimP from Methylococcus capsulatus (strain ATCC 33009 / NCIMB 11132 / Bath).